Consider the following 403-residue polypeptide: Alpha-1-antiproteinase F (403 aa).

A signal peptide spans 1–22 (SAIPRGLLLLAGLCCLVFGIMA). 5 N-linked (GlcNAc...) asparagine glycosylation sites follow: Asn-55, Asn-92, Asn-155, Asn-222, and Asn-256. Residues 358–377 (GATELEITPHSVPQDLFFNK) form an RCL region.

The protein belongs to the serpin family.

The protein resides in the secreted. In terms of biological role, inhibits elastase, chymotrypsin, cathepsin G, plasmin, and trypsin. The protein is Alpha-1-antiproteinase F of Cavia porcellus (Guinea pig).